The sequence spans 430 residues: Enolase (430 aa).

Q167 contributes to the (2R)-2-phosphoglycerate binding site. The Proton donor role is filled by E209. Mg(2+)-binding residues include D246, E287, and D314. (2R)-2-phosphoglycerate-binding residues include K339, R368, S369, and K390. The active-site Proton acceptor is K339.

It belongs to the enolase family. Mg(2+) serves as cofactor.

It is found in the cytoplasm. It localises to the secreted. Its subcellular location is the cell surface. It catalyses the reaction (2R)-2-phosphoglycerate = phosphoenolpyruvate + H2O. It participates in carbohydrate degradation; glycolysis; pyruvate from D-glyceraldehyde 3-phosphate: step 4/5. Functionally, catalyzes the reversible conversion of 2-phosphoglycerate (2-PG) into phosphoenolpyruvate (PEP). It is essential for the degradation of carbohydrates via glycolysis. The sequence is that of Enolase from Prochlorococcus marinus (strain MIT 9301).